The primary structure comprises 316 residues: Ornithine carbamoyltransferase (316 aa).

Carbamoyl phosphate-binding positions include 59–62, Gln86, Arg110, and 137–140; these read STRT and HPCQ. L-ornithine is bound by residues Asn168, Asp232, and 236–237; that span reads SM. Carbamoyl phosphate contacts are provided by residues 273 to 274 and Arg301; that span reads CL.

It belongs to the aspartate/ornithine carbamoyltransferase superfamily. OTCase family.

It localises to the cytoplasm. It catalyses the reaction carbamoyl phosphate + L-ornithine = L-citrulline + phosphate + H(+). Its pathway is amino-acid biosynthesis; L-arginine biosynthesis; L-arginine from L-ornithine and carbamoyl phosphate: step 1/3. Functionally, reversibly catalyzes the transfer of the carbamoyl group from carbamoyl phosphate (CP) to the N(epsilon) atom of ornithine (ORN) to produce L-citrulline. The polypeptide is Ornithine carbamoyltransferase (Listeria monocytogenes serotype 4b (strain F2365)).